We begin with the raw amino-acid sequence, 367 residues long: Probable protein phosphatase 2C 57 (367 aa).

A disordered region spans residues 1 to 29 (MEEHRLGGGGGGGGGGGRPPIPGAAGRKL). The segment covering 7–18 (GGGGGGGGGGGR) has biased composition (gly residues). The PPM-type phosphatase domain occupies 67–331 (RSGGWADIGS…DNLSVVVICF (265 aa)). Mn(2+) contacts are provided by Asp111, Gly112, Asp279, and Asp322.

The protein belongs to the PP2C family. Mg(2+) is required as a cofactor. Requires Mn(2+) as cofactor.

The enzyme catalyses O-phospho-L-seryl-[protein] + H2O = L-seryl-[protein] + phosphate. It catalyses the reaction O-phospho-L-threonyl-[protein] + H2O = L-threonyl-[protein] + phosphate. This is Probable protein phosphatase 2C 57 from Oryza sativa subsp. japonica (Rice).